The following is a 347-amino-acid chain: uncharacterized protein (347 aa).

A run of 10 helical transmembrane segments spans residues 15 to 35, 46 to 66, 84 to 104, 111 to 131, 149 to 169, 182 to 202, 214 to 234, 249 to 269, 283 to 303, and 312 to 332; these read FVPSWFAAVMGTGILAVDSLL, VAVGLFYFNVLLFFIFLVPWV, VLSAFYPTIAVSCLVLGADFI, FWGGVFWTLGAIGMFLFSLIV, GWYIPPVGLIVIPIAGSLIMP, INYFGWGAGFFLYLALLAVVI, AMAPTVWINLGPIGAGIVALI, FYIFSFIFWGFGLWWSLMAII, AMSWWAFIFPLGAYVASSHLV, and IDYIGFGLYWLLFFFWAITLI.

Belongs to the tellurite-resistance/dicarboxylate transporter (TDT) family.

The protein localises to the cell membrane. This is an uncharacterized protein from Methanocaldococcus jannaschii (strain ATCC 43067 / DSM 2661 / JAL-1 / JCM 10045 / NBRC 100440) (Methanococcus jannaschii).